Here is a 122-residue protein sequence, read N- to C-terminus: Large-conductance mechanosensitive channel (122 aa).

2 helical membrane-spanning segments follow: residues 29–49 (FGKI…GLIF) and 66–86 (GVFI…FLFI).

The protein belongs to the MscL family. As to quaternary structure, homopentamer.

The protein localises to the cell membrane. Channel that opens in response to stretch forces in the membrane lipid bilayer. May participate in the regulation of osmotic pressure changes within the cell. This is Large-conductance mechanosensitive channel from Macrococcus caseolyticus (strain JCSC5402) (Macrococcoides caseolyticum).